A 253-amino-acid chain; its full sequence is Transposase for insertion sequence element IS904 (253 aa).

The Integrase catalytic domain occupies 90 to 253; sequence KATAPNKVWL…SPKDFEKYNS (164 aa).

It belongs to the transposase IS3/IS150/IS904 family.

Its function is as follows. Involved in the transposition of the insertion sequence. In Lactococcus lactis subsp. lactis (strain IL1403) (Streptococcus lactis), this protein is Transposase for insertion sequence element IS904 (nisX1).